A 96-amino-acid chain; its full sequence is MPGEIQVEVAYALPEKQYLRKVKLPEGASVEEAIIASGLLELRKDIDLKKNKVGIYSRPVKLADTLNDGDRVEIYRPLIADPKELRRQRAERAAKK.

The protein belongs to the UPF0125 (RnfH) family.

The polypeptide is Protein RnfH (Cronobacter sakazakii (strain ATCC BAA-894) (Enterobacter sakazakii)).